The following is a 163-amino-acid chain: uncharacterized protein (163 aa).

This is an uncharacterized protein from Orgyia pseudotsugata (Douglas-fir tussock moth).